Consider the following 180-residue polypeptide: Large ribosomal subunit protein uL6 (180 aa).

The protein belongs to the universal ribosomal protein uL6 family. Part of the 50S ribosomal subunit.

In terms of biological role, this protein binds to the 23S rRNA, and is important in its secondary structure. It is located near the subunit interface in the base of the L7/L12 stalk, and near the tRNA binding site of the peptidyltransferase center. This Borrelia recurrentis (strain A1) protein is Large ribosomal subunit protein uL6.